Reading from the N-terminus, the 667-residue chain is Bicarbonate transport ATP-binding protein CmpC (667 aa).

The ABC transporter domain maps to 5-239 (VAVDNIDKVF…RPRKRMEVVE (235 aa)). 42-49 (GHSGCGKS) is a binding site for ATP. Residues 281 to 667 (LELGYVPLVA…DNPTPAPVFA (387 aa)) form a cmpA-like region.

The protein belongs to the ABC transporter superfamily. Nitrate/nitrite/cyanate uptake transporter (NitT) (TC 3.A.1.16) family. The complex is composed of two ATP-binding proteins (CmpC and CmpD), a transmembrane protein (CmpB) and a solute-binding protein (CmpA).

It is found in the cell inner membrane. Part of the ABC transporter complex CmpABCD involved in bicarbonate transport. Responsible for energy coupling to the transport system. This Synechocystis sp. (strain ATCC 27184 / PCC 6803 / Kazusa) protein is Bicarbonate transport ATP-binding protein CmpC (cmpC).